Here is an 875-residue protein sequence, read N- to C-terminus: GATOR2 complex protein MIOS (875 aa).

WD repeat units follow at residues 58-100 (SDTP…NSKF), 111-155 (KHAR…TPDI), 182-221 (GQNDACLSLCWLPRDQKLLLAGMHRNLAIFDLRNTSQKMF), 223-261 (NTKAVQGVTVDPYFHDRVASFYEGQVAIWDLRKFEKPVL), 265-306 (EQPK…TPIG), and 395-437 (RLRA…KQYT). The segment at 735–781 (VSCNFCGKSISYSCSAVPHQGRGFSQYGVSGSPTKSKVTSCPGCRKP) adopts a C4-type zinc-finger fold. Cys-737 and Cys-740 together coordinate Zn(2+). Phosphoserine occurs at positions 759 and 766. Zn(2+) is bound by residues Cys-775, Cys-778, Cys-788, Cys-827, Cys-830, His-832, His-835, His-838, Cys-849, Cys-854, and Cys-858. The RING-type; atypical zinc-finger motif lies at 782–863 (LPRCALCLIN…CTCKCMQLDT (82 aa)).

The protein belongs to the WD repeat mio family. Component of the GATOR2 subcomplex, composed of MIOS, SEC13, SEH1L, WDR24 and WDR59. The GATOR2 complex interacts with CASTOR1 and CASTOR2; the interaction is negatively regulated by arginine. CASTOR1 and CASTOR2 convey leucine availability via direct interaction with MIOS. The GATOR2 complex interacts with SESN1, SESN2 and SESN3; the interaction is negatively regulated by amino acids. Interacts with SAR1A and SAR1B; the interaction is direct, disrupted by leucine and mediates the interaction of SAR1A or SAR1B with the GATOR2 complex to negatively regulate the TORC1 signaling upon leucine deprivation.

It is found in the lysosome membrane. Its activity is regulated as follows. The GATOR2 complex is negatively regulated by the upstream amino acid sensors CASTOR1 and SESN2, which sequester the GATOR2 complex in absence of amino acids. In the presence of abundant amino acids, GATOR2 is released from CASTOR1 and SESN2 and activated. In terms of biological role, as a component of the GATOR2 complex, functions as an activator of the amino acid-sensing branch of the mTORC1 signaling pathway. The GATOR2 complex indirectly activates mTORC1 through the inhibition of the GATOR1 subcomplex. GATOR2 probably acts as an E3 ubiquitin-protein ligase toward GATOR1. In the presence of abundant amino acids, the GATOR2 complex mediates ubiquitination of the NPRL2 core component of the GATOR1 complex, leading to GATOR1 inactivation. In the absence of amino acids, GATOR2 is inhibited, activating the GATOR1 complex. Within the GATOR2 complex, MIOS is required to prevent autoubiquitination of WDR24, the catalytic subunit of the complex. The GATOR2 complex is required for brain myelination. The sequence is that of GATOR2 complex protein MIOS from Homo sapiens (Human).